The primary structure comprises 472 residues: UDP-N-acetylmuramate--L-alanine ligase (472 aa).

Position 121 to 127 (121 to 127 (GTHGKTT)) interacts with ATP.

The protein belongs to the MurCDEF family.

Its subcellular location is the cytoplasm. The catalysed reaction is UDP-N-acetyl-alpha-D-muramate + L-alanine + ATP = UDP-N-acetyl-alpha-D-muramoyl-L-alanine + ADP + phosphate + H(+). It functions in the pathway cell wall biogenesis; peptidoglycan biosynthesis. Its function is as follows. Cell wall formation. In Hahella chejuensis (strain KCTC 2396), this protein is UDP-N-acetylmuramate--L-alanine ligase.